The sequence spans 241 residues: Uridylate kinase (241 aa).

15 to 18 (KLSG) is a binding site for ATP. Residues 23–28 (GSEGFG) form an involved in allosteric activation by GTP region. Gly57 provides a ligand contact to UMP. ATP contacts are provided by Gly58 and Arg62. UMP-binding positions include Asp77 and 138–145 (TGNPFFTT). Thr165, Phe171, and Asp174 together coordinate ATP.

The protein belongs to the UMP kinase family. As to quaternary structure, homohexamer.

The protein localises to the cytoplasm. The catalysed reaction is UMP + ATP = UDP + ADP. The protein operates within pyrimidine metabolism; CTP biosynthesis via de novo pathway; UDP from UMP (UMPK route): step 1/1. Its activity is regulated as follows. Allosterically activated by GTP. Inhibited by UTP. Functionally, catalyzes the reversible phosphorylation of UMP to UDP. In Klebsiella pneumoniae subsp. pneumoniae (strain ATCC 700721 / MGH 78578), this protein is Uridylate kinase.